The sequence spans 168 residues: 3'-5' exoribonuclease MT2234.1 (168 aa).

Aspartate 6 is a binding site for Mg(2+). The segment at 6–9 is RNA binding; that stretch reads DTEF.

In terms of assembly, homodimer. The cofactor is Mg(2+).

Exonuclease that cleaves single-stranded 3' overhangs of double-stranded RNA. This Mycobacterium tuberculosis (strain CDC 1551 / Oshkosh) protein is 3'-5' exoribonuclease MT2234.1.